A 206-amino-acid polypeptide reads, in one-letter code: Small ribosomal subunit protein uS4 (206 aa).

In terms of domain architecture, S4 RNA-binding spans 96–156; that stretch reads CRLDNVVYRM…EKAKNQLRIV (61 aa).

This sequence belongs to the universal ribosomal protein uS4 family. Part of the 30S ribosomal subunit. Contacts protein S5. The interaction surface between S4 and S5 is involved in control of translational fidelity.

One of the primary rRNA binding proteins, it binds directly to 16S rRNA where it nucleates assembly of the body of the 30S subunit. Functionally, with S5 and S12 plays an important role in translational accuracy. The chain is Small ribosomal subunit protein uS4 from Pseudomonas savastanoi pv. phaseolicola (strain 1448A / Race 6) (Pseudomonas syringae pv. phaseolicola (strain 1448A / Race 6)).